Consider the following 354-residue polypeptide: Glycerol-3-phosphate dehydrogenase [NAD(+)], glycosomal (354 aa).

NAD(+) contacts are provided by residues 15–20, phenylalanine 90, lysine 118, and alanine 150; that span reads GSGAFG. Lysine 118 contacts substrate. Lysine 203 serves as the catalytic Proton acceptor. 2 residues coordinate NAD(+): arginine 267 and glutamate 293. 267 to 268 contributes to the substrate binding site; the sequence is RN. The Microbody targeting signal motif lies at 352–354; it reads SKM.

It belongs to the NAD-dependent glycerol-3-phosphate dehydrogenase family.

The protein localises to the glycosome. The catalysed reaction is sn-glycerol 3-phosphate + NAD(+) = dihydroxyacetone phosphate + NADH + H(+). The polypeptide is Glycerol-3-phosphate dehydrogenase [NAD(+)], glycosomal (GPD) (Trypanosoma brucei rhodesiense).